We begin with the raw amino-acid sequence, 416 residues long: Glutamyl-tRNA reductase (416 aa).

Substrate-binding positions include 49 to 52 (TCNR), Ser105, 110 to 112 (EPQ), and Gln116. Cys50 acts as the Nucleophile in catalysis. 185-190 (GAGETI) serves as a coordination point for NADP(+).

The protein belongs to the glutamyl-tRNA reductase family. As to quaternary structure, homodimer.

It carries out the reaction (S)-4-amino-5-oxopentanoate + tRNA(Glu) + NADP(+) = L-glutamyl-tRNA(Glu) + NADPH + H(+). The protein operates within porphyrin-containing compound metabolism; protoporphyrin-IX biosynthesis; 5-aminolevulinate from L-glutamyl-tRNA(Glu): step 1/2. Its function is as follows. Catalyzes the NADPH-dependent reduction of glutamyl-tRNA(Glu) to glutamate 1-semialdehyde (GSA). This Shewanella denitrificans (strain OS217 / ATCC BAA-1090 / DSM 15013) protein is Glutamyl-tRNA reductase.